Consider the following 186-residue polypeptide: Elongation factor P (186 aa).

Belongs to the elongation factor P family.

The protein localises to the cytoplasm. Its pathway is protein biosynthesis; polypeptide chain elongation. Its function is as follows. Involved in peptide bond synthesis. Stimulates efficient translation and peptide-bond synthesis on native or reconstituted 70S ribosomes in vitro. Probably functions indirectly by altering the affinity of the ribosome for aminoacyl-tRNA, thus increasing their reactivity as acceptors for peptidyl transferase. In Prochlorococcus marinus (strain MIT 9312), this protein is Elongation factor P.